The chain runs to 246 residues: 5'-nucleotidase SurE (246 aa).

A divalent metal cation contacts are provided by Asp8, Asp9, Ser39, and Asn91.

It belongs to the SurE nucleotidase family. The cofactor is a divalent metal cation.

Its subcellular location is the cytoplasm. It carries out the reaction a ribonucleoside 5'-phosphate + H2O = a ribonucleoside + phosphate. In terms of biological role, nucleotidase that shows phosphatase activity on nucleoside 5'-monophosphates. This chain is 5'-nucleotidase SurE, found in Actinobacillus succinogenes (strain ATCC 55618 / DSM 22257 / CCUG 43843 / 130Z).